Consider the following 121-residue polypeptide: Small ribosomal subunit protein uS13 (121 aa).

Residues 88–121 form a disordered region; it reads GMRHRRGLPTRGQNTKNNARTRKGPAKSIAGKKK. The span at 106–121 shows a compositional bias: basic residues; sequence ARTRKGPAKSIAGKKK.

This sequence belongs to the universal ribosomal protein uS13 family. Part of the 30S ribosomal subunit. Forms a loose heterodimer with protein S19. Forms two bridges to the 50S subunit in the 70S ribosome.

Its function is as follows. Located at the top of the head of the 30S subunit, it contacts several helices of the 16S rRNA. In the 70S ribosome it contacts the 23S rRNA (bridge B1a) and protein L5 of the 50S subunit (bridge B1b), connecting the 2 subunits; these bridges are implicated in subunit movement. Contacts the tRNAs in the A and P-sites. The protein is Small ribosomal subunit protein uS13 of Lactococcus lactis subsp. cremoris (strain MG1363).